A 183-amino-acid chain; its full sequence is MIAIYPGSFDPITLGHLDLIQRGSRLFERVIVAVLRNPNKTPLFSVQQRLEQIRLSTQHLPNVEVDSFDGLTVNYAQMRHAQVLLRGLRAVSDFEVELQMAHTNKTLSTQIETVFLATSNEYSFLSSSVVREIARFGGSIDHLVPPHIALDIYQCYNHNSPMLNPISTEAIPPLKNISVEREA.

S8 contacts substrate. Residues 8–9 (SF) and H16 each bind ATP. Substrate is bound by residues K40, T72, and R86. ATP is bound by residues 87-89 (GLR), E97, and 122-128 (YSFLSSS).

This sequence belongs to the bacterial CoaD family. As to quaternary structure, homohexamer. Mg(2+) serves as cofactor.

It localises to the cytoplasm. It catalyses the reaction (R)-4'-phosphopantetheine + ATP + H(+) = 3'-dephospho-CoA + diphosphate. It participates in cofactor biosynthesis; coenzyme A biosynthesis; CoA from (R)-pantothenate: step 4/5. Its function is as follows. Reversibly transfers an adenylyl group from ATP to 4'-phosphopantetheine, yielding dephospho-CoA (dPCoA) and pyrophosphate. In Nostoc punctiforme (strain ATCC 29133 / PCC 73102), this protein is Phosphopantetheine adenylyltransferase.